Here is a 130-residue protein sequence, read N- to C-terminus: Small ribosomal subunit protein uS8 (130 aa).

The protein belongs to the universal ribosomal protein uS8 family. Part of the 30S ribosomal subunit.

Functionally, one of the primary rRNA binding proteins, it binds directly to 16S rRNA central domain where it helps coordinate assembly of the platform of the 30S subunit. The chain is Small ribosomal subunit protein uS8 from Thermococcus kodakarensis (strain ATCC BAA-918 / JCM 12380 / KOD1) (Pyrococcus kodakaraensis (strain KOD1)).